The primary structure comprises 90 residues: Antitoxin epsilon (90 aa).

It belongs to the epsilon antitoxin family. In terms of assembly, in the presence of the zeta toxin, forms an inactive PezA(2)PezT(2) heterotetramer.

Its function is as follows. Antitoxin component of a type II toxin-antitoxin (TA) system. Neutralizes the toxic effect of cognate zeta toxin. Part of a postsegregational killing (PSK) system involved in the killing of plasmid-free cells. Continuous synthesis of the epsilon antitoxin is required to counteract the zeta toxin. The polypeptide is Antitoxin epsilon (Streptococcus agalactiae).